The primary structure comprises 309 residues: Mycothiol acetyltransferase (309 aa).

2 N-acetyltransferase domains span residues 16-158 (ETLA…LDLP) and 166-309 (VSVR…RTET). Glu47 lines the 1D-myo-inositol 2-(L-cysteinylamino)-2-deoxy-alpha-D-glucopyranoside pocket. Position 92–94 (92–94 (LVV)) interacts with acetyl-CoA. 1D-myo-inositol 2-(L-cysteinylamino)-2-deoxy-alpha-D-glucopyranoside contacts are provided by Glu193, Lys232, and Glu241. Residues 245–247 (LGI) and 252–258 (QGGGLGK) contribute to the acetyl-CoA site. Tyr279 contacts 1D-myo-inositol 2-(L-cysteinylamino)-2-deoxy-alpha-D-glucopyranoside.

The protein belongs to the acetyltransferase family. MshD subfamily. In terms of assembly, monomer.

The enzyme catalyses 1D-myo-inositol 2-(L-cysteinylamino)-2-deoxy-alpha-D-glucopyranoside + acetyl-CoA = mycothiol + CoA + H(+). In terms of biological role, catalyzes the transfer of acetyl from acetyl-CoA to desacetylmycothiol (Cys-GlcN-Ins) to form mycothiol. This Streptomyces coelicolor (strain ATCC BAA-471 / A3(2) / M145) protein is Mycothiol acetyltransferase.